The sequence spans 188 residues: Elongation factor P (188 aa).

The protein belongs to the elongation factor P family.

It is found in the cytoplasm. The protein operates within protein biosynthesis; polypeptide chain elongation. Functionally, involved in peptide bond synthesis. Stimulates efficient translation and peptide-bond synthesis on native or reconstituted 70S ribosomes in vitro. Probably functions indirectly by altering the affinity of the ribosome for aminoacyl-tRNA, thus increasing their reactivity as acceptors for peptidyl transferase. The sequence is that of Elongation factor P from Pelodictyon phaeoclathratiforme (strain DSM 5477 / BU-1).